The primary structure comprises 326 residues: Transcription cofactor vestigial-like protein 3 (326 aa).

Positions 57–80 (VTLPSKQEEEDEEEEEEEKDQPAE) are disordered. Residue Lys-62 forms a Glycyl lysine isopeptide (Lys-Gly) (interchain with G-Cter in SUMO2) linkage. The segment covering 64–75 (EEEDEEEEEEEK) has biased composition (acidic residues). A Glycyl lysine isopeptide (Lys-Gly) (interchain with G-Cter in SUMO2) cross-link involves residue Lys-126. Disordered regions lie at residues 175–203 (PPGT…PPAV) and 233–256 (HAHM…SALD). Over residues 233–249 (HAHMHHRHRHHHHHHHP) the composition is skewed to basic residues.

The protein belongs to the vestigial family. Enriched in placenta.

It localises to the nucleus. May act as a specific coactivator for the mammalian TEFs. In Homo sapiens (Human), this protein is Transcription cofactor vestigial-like protein 3 (VGLL3).